The following is a 185-amino-acid chain: Large ribosomal subunit protein uL5 (185 aa).

It belongs to the universal ribosomal protein uL5 family. Part of the 50S ribosomal subunit; part of the 5S rRNA/L5/L18/L25 subcomplex. Contacts the 5S rRNA and the P site tRNA. Forms a bridge to the 30S subunit in the 70S ribosome.

In terms of biological role, this is one of the proteins that bind and probably mediate the attachment of the 5S RNA into the large ribosomal subunit, where it forms part of the central protuberance. In the 70S ribosome it contacts protein S13 of the 30S subunit (bridge B1b), connecting the 2 subunits; this bridge is implicated in subunit movement. Contacts the P site tRNA; the 5S rRNA and some of its associated proteins might help stabilize positioning of ribosome-bound tRNAs. The chain is Large ribosomal subunit protein uL5 from Phocaeicola vulgatus (strain ATCC 8482 / DSM 1447 / JCM 5826 / CCUG 4940 / NBRC 14291 / NCTC 11154) (Bacteroides vulgatus).